A 338-amino-acid polypeptide reads, in one-letter code: CRISPR system Cmr subunit Cmr1-1 (338 aa).

Belongs to the CRISPR system Cmr1 family. Part of the type III-B Cmr ribonucleoprotein (RNP) complex, an elongated RNP with Cmr2 and Cmr3 as the base, with Cmr4 and Cmr5 forming a helical core along the mature crRNA (39 or 45 nt in length), while the complex is capped by Cmr6 and Cmr1. The 5' end of the crRNA is bound to Cmr2 and Cmr3, while Cmr6 and a Cmr1 subunit (Cmr1-1 or Cmr1-2) cap the 3' end of the crRNA. The target RNA lies antiparallel to the crRNA, with its 5' end near Cmr1 and Cmr6 and its 3' end near Cmr2 and Cmr3; major target cleavage occurs nears the junction of Cmr1/Cmr6 and Cmr4/Cmr, with minor cleavage occurring at 6 nt intervals which coincide with the proposed spacing of Cmr4 subunits.

The protein resides in the cytoplasm. CRISPR (clustered regularly interspaced short palindromic repeat), is an adaptive immune system that provides protection against mobile genetic elements (viruses, transposable elements and conjugative plasmids). CRISPR clusters contain sequences complementary to antecedent mobile elements and target invading nucleic acids. CRISPR clusters are transcribed and processed into CRISPR RNA (crRNA), formerly called psiRNA (prokaryotic silencing) in this organism. Part of the Cmr ribonucleoprotein complex which has divalent cation-dependent endoribonuclease activity specific for ssRNA complementary to the crRNA (target RNA), generating 5' hydroxy- and 3' phosphate or 2'-3' cyclic phosphate termini. Cmr4 is probably the subunit that cleaves target RNA. Cmr complex does not cleave ssDNA complementary to the crRNA. Cleavage of invading RNA is guided by the crRNA; substrate cleavage occurs a fixed distance (14 nt) from the 3' end of the crRNA. In vitro reconstitution shows Cmr1-2 and Cmr5 are not absolutely necessary for target cleavage. The polypeptide is CRISPR system Cmr subunit Cmr1-1 (Pyrococcus furiosus (strain ATCC 43587 / DSM 3638 / JCM 8422 / Vc1)).